We begin with the raw amino-acid sequence, 190 residues long: RING finger protein 227 (190 aa).

An RING-type zinc finger spans residues 18–81 (CNICYRPFNL…RRVVTCPFCR (64 aa)). The segment at 111–145 (KCERDEAGNPAKESSDADGEAEEEGESEKGAGPRS) is disordered. A compositionally biased stretch (acidic residues) spans 126 to 136 (DADGEAEEEGE).

This is RING finger protein 227 from Homo sapiens (Human).